A 187-amino-acid chain; its full sequence is Isopentenyl-diphosphate Delta-isomerase (187 aa).

Histidine 36, histidine 43, and histidine 80 together coordinate Mn(2+). Positions 41–178 constitute a Nudix hydrolase domain; sequence VRHRAFTALL…RQLRLCPWFE (138 aa). Glutamate 98 is a binding site for Mg(2+). Mn(2+) is bound by residues glutamate 127 and glutamate 129. The active site involves glutamate 129.

Belongs to the IPP isomerase type 1 family. It depends on Mg(2+) as a cofactor. The cofactor is Mn(2+).

It localises to the cytoplasm. It carries out the reaction isopentenyl diphosphate = dimethylallyl diphosphate. It participates in isoprenoid biosynthesis; dimethylallyl diphosphate biosynthesis; dimethylallyl diphosphate from isopentenyl diphosphate: step 1/1. Functionally, catalyzes the 1,3-allylic rearrangement of the homoallylic substrate isopentenyl (IPP) to its highly electrophilic allylic isomer, dimethylallyl diphosphate (DMAPP). This is Isopentenyl-diphosphate Delta-isomerase from Haloarcula marismortui (strain ATCC 43049 / DSM 3752 / JCM 8966 / VKM B-1809) (Halobacterium marismortui).